The sequence spans 423 residues: AP-1 complex subunit mu-2 (423 aa).

Residues 168–421 (KNEVFIDVIE…ITQSGDYQLR (254 aa)) enclose the MHD domain.

This sequence belongs to the adaptor complexes medium subunit family. Adaptor protein complex 1 (AP-1) is a heterotetramer composed of two large adaptins (gamma-type subunit AP1G1 and beta-type subunit AP1B1), a medium adaptin (mu-type subunit AP1M1 or AP1M2) and a small adaptin (sigma-type subunit AP1S1 or AP1S2 or AP1S3). Interacts with P2X4. Post-translationally, phosphorylation of membrane-bound AP1M1/AP1M2 increases its affinity for sorting signals.

It is found in the golgi apparatus. The protein localises to the cytoplasmic vesicle. Its subcellular location is the clathrin-coated vesicle membrane. Its function is as follows. Subunit of clathrin-associated adaptor protein complex 1 that plays a role in protein sorting in the trans-Golgi network (TGN) and endosomes. The AP complexes mediate the recruitment of clathrin to membranes and the recognition of sorting signals within the cytosolic tails of transmembrane cargo molecules. The sequence is that of AP-1 complex subunit mu-2 (Ap1m2) from Mus musculus (Mouse).